Consider the following 218-residue polypeptide: Thiamine-phosphate synthase (218 aa).

4-amino-2-methyl-5-(diphosphooxymethyl)pyrimidine contacts are provided by residues 43–47 and Asn75; that span reads QLRMK. Positions 76 and 95 each coordinate Mg(2+). Thr114 is a binding site for 4-amino-2-methyl-5-(diphosphooxymethyl)pyrimidine. 140 to 142 lines the 2-[(2R,5Z)-2-carboxy-4-methylthiazol-5(2H)-ylidene]ethyl phosphate pocket; that stretch reads TST. Lys143 contacts 4-amino-2-methyl-5-(diphosphooxymethyl)pyrimidine. 2-[(2R,5Z)-2-carboxy-4-methylthiazol-5(2H)-ylidene]ethyl phosphate contacts are provided by residues Gly171 and 191-192; that span reads VS.

The protein belongs to the thiamine-phosphate synthase family. Mg(2+) is required as a cofactor.

It catalyses the reaction 2-[(2R,5Z)-2-carboxy-4-methylthiazol-5(2H)-ylidene]ethyl phosphate + 4-amino-2-methyl-5-(diphosphooxymethyl)pyrimidine + 2 H(+) = thiamine phosphate + CO2 + diphosphate. It carries out the reaction 2-(2-carboxy-4-methylthiazol-5-yl)ethyl phosphate + 4-amino-2-methyl-5-(diphosphooxymethyl)pyrimidine + 2 H(+) = thiamine phosphate + CO2 + diphosphate. The enzyme catalyses 4-methyl-5-(2-phosphooxyethyl)-thiazole + 4-amino-2-methyl-5-(diphosphooxymethyl)pyrimidine + H(+) = thiamine phosphate + diphosphate. The protein operates within cofactor biosynthesis; thiamine diphosphate biosynthesis; thiamine phosphate from 4-amino-2-methyl-5-diphosphomethylpyrimidine and 4-methyl-5-(2-phosphoethyl)-thiazole: step 1/1. Condenses 4-methyl-5-(beta-hydroxyethyl)thiazole monophosphate (THZ-P) and 2-methyl-4-amino-5-hydroxymethyl pyrimidine pyrophosphate (HMP-PP) to form thiamine monophosphate (TMP). This is Thiamine-phosphate synthase from Myxococcus xanthus (strain DK1622).